A 476-amino-acid polypeptide reads, in one-letter code: uncharacterized protein (476 aa).

Residues 147 to 204 (DVRLAELRRRRAELEAEIAAVEAGDIAVLDPTAVRDRYQQLSTTARELLSDFREVEEN) are a coiled coil.

This is an uncharacterized protein from Mycolicibacterium smegmatis (strain ATCC 700084 / mc(2)155) (Mycobacterium smegmatis).